A 310-amino-acid chain; its full sequence is uncharacterized protein (310 aa).

5 consecutive transmembrane segments (helical) span residues 10–30 (AVLS…AYAI), 44–64 (TVNL…ATPA), 78–98 (FSSG…GYSA), 113–133 (LGIA…WILW), and 161–181 (VVVA…PLIA). Residues 285–297 (PLEDPKSWQHPDE) show a composition bias toward basic and acidic residues. The disordered stretch occupies residues 285–310 (PLEDPKSWQHPDEFPPSAPLNRDKPN).

It belongs to the cation diffusion facilitator (CDF) transporter (TC 2.A.4) family.

It is found in the cell membrane. This is an uncharacterized protein from Synechocystis sp. (strain ATCC 27184 / PCC 6803 / Kazusa).